The primary structure comprises 240 residues: Adapter protein MecA (240 aa).

Belongs to the MecA family. As to quaternary structure, homodimer.

In terms of biological role, enables the recognition and targeting of unfolded and aggregated proteins to the ClpC protease or to other proteins involved in proteolysis. The chain is Adapter protein MecA from Streptococcus mutans serotype c (strain ATCC 700610 / UA159).